A 100-amino-acid polypeptide reads, in one-letter code: Urease subunit gamma (100 aa).

The protein belongs to the urease gamma subunit family. In terms of assembly, heterotrimer of UreA (gamma), UreB (beta) and UreC (alpha) subunits. Three heterotrimers associate to form the active enzyme.

It is found in the cytoplasm. The enzyme catalyses urea + 2 H2O + H(+) = hydrogencarbonate + 2 NH4(+). It functions in the pathway nitrogen metabolism; urea degradation; CO(2) and NH(3) from urea (urease route): step 1/1. The sequence is that of Urease subunit gamma from Stutzerimonas stutzeri (strain A1501) (Pseudomonas stutzeri).